A 420-amino-acid chain; its full sequence is D-inositol 3-phosphate glycosyltransferase (420 aa).

Position 13 (His13) interacts with 1D-myo-inositol 3-phosphate. UDP-N-acetyl-alpha-D-glucosamine-binding positions include 19–20 and Gly27; that span reads QP. Residues 24-29, Lys82, Tyr115, Thr139, and Arg159 contribute to the 1D-myo-inositol 3-phosphate site; that span reads DAGGMN. 3 residues coordinate UDP-N-acetyl-alpha-D-glucosamine: Arg233, Lys238, and Val294. Residues Phe303, Arg304, and Ala306 each coordinate Mg(2+). Residues Glu316 and Glu324 each contribute to the UDP-N-acetyl-alpha-D-glucosamine site. Thr330 contacts Mg(2+).

Belongs to the glycosyltransferase group 1 family. MshA subfamily. Homodimer.

It carries out the reaction 1D-myo-inositol 3-phosphate + UDP-N-acetyl-alpha-D-glucosamine = 1D-myo-inositol 2-acetamido-2-deoxy-alpha-D-glucopyranoside 3-phosphate + UDP + H(+). Functionally, catalyzes the transfer of a N-acetyl-glucosamine moiety to 1D-myo-inositol 3-phosphate to produce 1D-myo-inositol 2-acetamido-2-deoxy-glucopyranoside 3-phosphate in the mycothiol biosynthesis pathway. The sequence is that of D-inositol 3-phosphate glycosyltransferase from Pseudarthrobacter chlorophenolicus (strain ATCC 700700 / DSM 12829 / CIP 107037 / JCM 12360 / KCTC 9906 / NCIMB 13794 / A6) (Arthrobacter chlorophenolicus).